A 408-amino-acid polypeptide reads, in one-letter code: Peptidase T (408 aa).

His78 contributes to the Zn(2+) binding site. Residue Asp80 is part of the active site. Position 140 (Asp140) interacts with Zn(2+). The active-site Proton acceptor is the Glu173. Zn(2+)-binding residues include Glu174, Asp196, and His379.

The protein belongs to the peptidase M20B family. It depends on Zn(2+) as a cofactor.

The protein localises to the cytoplasm. It carries out the reaction Release of the N-terminal residue from a tripeptide.. Functionally, cleaves the N-terminal amino acid of tripeptides. The chain is Peptidase T from Escherichia coli O6:K15:H31 (strain 536 / UPEC).